The chain runs to 49 residues: Large ribosomal subunit protein bL33B (49 aa).

This sequence belongs to the bacterial ribosomal protein bL33 family.

In Bacillus velezensis (strain DSM 23117 / BGSC 10A6 / LMG 26770 / FZB42) (Bacillus amyloliquefaciens subsp. plantarum), this protein is Large ribosomal subunit protein bL33B.